The primary structure comprises 396 residues: MVKNFLGSSVTSGSAGAEHGKTLQIPTLRWVRQSKTSIMALVICLGRIVKTALVTGGSGYFGELLSKQLLRQGTYVRVFDLNPPGFSHPNLEFLKGTILDRNAVRQALSGIDKVFHNVAQVPLAKEKDLFWSVNCGGTQIIVDESVATGIEKFVYTSSSAVFGAPKSNPVTEETEPNPAEDYGRAKLAGEIICKEAMQRDGLDVAIVRPRTVLGYGRQGVVQILFDWVERGLDIPVLGGGNNKYQFVHSDDLASACIAASNVKGFATYNIGAAEFGTMRELLQVVIKHAETGSRIKSIPMGPTALAANLASALGLSPLGPYHSLMYGRAMYFDISKAQKELGYAPRYSNSQMMIETYNWYQANRASLGKGGGSRHKAPVKQQLLALLPYALRLIPG.

This sequence belongs to the NAD(P)-dependent epimerase/dehydratase family. Requires NAD(+) as cofactor. NADP(+) serves as cofactor.

Functionally, putative nucleotide sugar epimerase/dehydrogenase. This is an uncharacterized protein from Sinorhizobium fredii (strain NBRC 101917 / NGR234).